The chain runs to 477 residues: Methylenetetrahydrofolate--tRNA-(uracil-5-)-methyltransferase TrmFO (477 aa).

Residue 15–20 (GAGLAG) coordinates FAD.

It belongs to the MnmG family. TrmFO subfamily. It depends on FAD as a cofactor.

The protein resides in the cytoplasm. It catalyses the reaction uridine(54) in tRNA + (6R)-5,10-methylene-5,6,7,8-tetrahydrofolate + NADH + H(+) = 5-methyluridine(54) in tRNA + (6S)-5,6,7,8-tetrahydrofolate + NAD(+). The catalysed reaction is uridine(54) in tRNA + (6R)-5,10-methylene-5,6,7,8-tetrahydrofolate + NADPH + H(+) = 5-methyluridine(54) in tRNA + (6S)-5,6,7,8-tetrahydrofolate + NADP(+). In terms of biological role, catalyzes the folate-dependent formation of 5-methyl-uridine at position 54 (M-5-U54) in all tRNAs. This chain is Methylenetetrahydrofolate--tRNA-(uracil-5-)-methyltransferase TrmFO, found in Nitrobacter hamburgensis (strain DSM 10229 / NCIMB 13809 / X14).